Reading from the N-terminus, the 501-residue chain is MPSASASRKSQEKPREIMDAAEDYAKERYGISSMIQSQEKPDRVLVRVRDLTIQKADEVVWVRARVHTSRAKGKQCFLVLRQQQFNVQALVAVGDHASKQMVKFAANINKESIVDVEGVVRKVNQKIGSCTQQDVELHVQKIYVISLAEPRLPLQLDDAVRPEAEGEEEGRATVNQDTRLDNRVIDLRTSTSQAVFRLQSGICHLFRETLINKGFVEIQTPKIISAASEGGANVFTVSYFKNNAYLAQSPQLYKQMCICADFEKVFSIGPVFRAEDSNTHRHLTEFVGLDIEMAFNYHYHEVMEEIADTMVQIFKGLQERFQTEIQTVNKQFPCEPFKFLEPTLRLEYCEALAMLREAGVEMGDEDDLSTPNEKLLGHLVKEKYDTDFYILDKYPLAVRPFYTMPDPRNPKQSNSYDMFMRGEEILSGAQRIHDPQLLTERALHHGIDLEKIKAYIDSFRFGAPPHAGGGIGLERVTMLFLGLHNVRQTSMFPRDPKRLTP.

T52 is subject to Phosphothreonine. An N6-acetyllysine modification is found at K74. Position 229 (E229) interacts with L-aspartate. The residue at position 249 (S249) is a Phosphoserine. Residues 251–254 (QLYK) are aspartate. Residue R273 participates in L-aspartate binding. ATP-binding positions include 273-275 (RAE) and 281-283 (RHL). At K374 the chain carries N6-acetyllysine. A binding site for the 3'-end of tRNA region spans residues 411-415 (KQSNS). E424 is a binding site for ATP. Residues S427 and R431 each contribute to the L-aspartate site. 472 to 475 (GLER) provides a ligand contact to ATP. T500 carries the phosphothreonine; by PKA modification.

It belongs to the class-II aminoacyl-tRNA synthetase family. Type 2 subfamily. In terms of assembly, homodimer. Part of a multisubunit complex that groups tRNA ligases for Arg (RARS1), Asp (DARS1), Gln (QARS1), Ile (IARS1), Leu (LARS1), Lys (KARS1), Met (MARS1) the bifunctional ligase for Glu and Pro (EPRS1) and the auxiliary subunits AIMP1/p43, AIMP2/p38 and EEF1E1/p18. As to expression, expression in the developing and adult brain shows similar patterns. Highly expressed in the ventricular and subventricular zones, including hippocampal subfields, the midlateral temporal cortex and the frontal polar cortex. The cerebellum, cerebral cortex, hippocampus, and lateral ventricle show preferential neuronal expression. Expression in the peripheral neurons is evident in the colon.

It is found in the cytoplasm. The protein resides in the cytosol. The enzyme catalyses tRNA(Asp) + L-aspartate + ATP = L-aspartyl-tRNA(Asp) + AMP + diphosphate. Functionally, catalyzes the specific attachment of an amino acid to its cognate tRNA in a 2 step reaction: the amino acid (AA) is first activated by ATP to form AA-AMP and then transferred to the acceptor end of the tRNA. The chain is Aspartate--tRNA ligase, cytoplasmic from Homo sapiens (Human).